Here is a 238-residue protein sequence, read N- to C-terminus: Ribonuclease 3 (238 aa).

The region spanning 4–127 (IEEFEKRLGY…TMGAIYLETG (124 aa)) is the RNase III domain. Mg(2+) is bound at residue Glu40. Asp44 is a catalytic residue. 2 residues coordinate Mg(2+): Asn113 and Glu116. Glu116 is an active-site residue. In terms of domain architecture, DRBM spans 154–223 (DYKTALQELT…ARIALEIFHR (70 aa)).

This sequence belongs to the ribonuclease III family. Homodimer. Mg(2+) is required as a cofactor.

Its subcellular location is the cytoplasm. It catalyses the reaction Endonucleolytic cleavage to 5'-phosphomonoester.. Its function is as follows. Digests double-stranded RNA. Involved in the processing of primary rRNA transcript to yield the immediate precursors to the large and small rRNAs (23S and 16S). Processes some mRNAs, and tRNAs when they are encoded in the rRNA operon. Processes pre-crRNA and tracrRNA of type II CRISPR loci if present in the organism. The protein is Ribonuclease 3 of Wolinella succinogenes (strain ATCC 29543 / DSM 1740 / CCUG 13145 / JCM 31913 / LMG 7466 / NCTC 11488 / FDC 602W) (Vibrio succinogenes).